A 121-amino-acid chain; its full sequence is MDKKVTRLRRAVPTRRKITQLGVHRLSVFRSNQHIYANIISPEGDRVVVSASTLEAEVRTQLAGQSGAGGNAAAAALIGKRVAEKAKAAGIELVAFDRSGFRYHGRVKALADAAREAGLKF.

It belongs to the universal ribosomal protein uL18 family. Part of the 50S ribosomal subunit; part of the 5S rRNA/L5/L18/L25 subcomplex. Contacts the 5S and 23S rRNAs.

This is one of the proteins that bind and probably mediate the attachment of the 5S RNA into the large ribosomal subunit, where it forms part of the central protuberance. The chain is Large ribosomal subunit protein uL18 from Bordetella avium (strain 197N).